The following is a 508-amino-acid chain: ATP synthase subunit alpha, chloroplastic (508 aa).

Position 172 to 179 (172 to 179) interacts with ATP; that stretch reads GDRQTGKT.

The protein belongs to the ATPase alpha/beta chains family. In terms of assembly, F-type ATPases have 2 components, CF(1) - the catalytic core - and CF(0) - the membrane proton channel. CF(1) has five subunits: alpha(3), beta(3), gamma(1), delta(1), epsilon(1). CF(0) has four main subunits: a, b, b' and c.

Its subcellular location is the plastid. The protein localises to the chloroplast thylakoid membrane. It catalyses the reaction ATP + H2O + 4 H(+)(in) = ADP + phosphate + 5 H(+)(out). Functionally, produces ATP from ADP in the presence of a proton gradient across the membrane. The alpha chain is a regulatory subunit. This Psilotum nudum (Whisk fern) protein is ATP synthase subunit alpha, chloroplastic.